A 1025-amino-acid chain; its full sequence is Multidrug resistance protein MdtC (1025 aa).

Helical transmembrane passes span 3 to 23 (FFAL…AITL), 333 to 353 (EVEQ…FLFL), 360 to 380 (IIPA…MYLC), 387 to 407 (LSLM…IVVL), 431 to 451 (VGFT…PLLL), 463 to 483 (FAVT…TLTP), 528 to 548 (LVGV…ISIP), 853 to 873 (VILI…LYES), 875 to 895 (VHPL…LLAL), 897 to 917 (LFNA…IGIV), 953 to 973 (PIMM…LSGG), and 984 to 1004 (ITIV…TPVV).

Belongs to the resistance-nodulation-cell division (RND) (TC 2.A.6) family. MdtC subfamily. As to quaternary structure, part of a tripartite efflux system composed of MdtA, MdtB and MdtC. MdtC forms a heteromultimer with MdtB.

Its subcellular location is the cell inner membrane. The MdtABC tripartite complex confers resistance against novobiocin and deoxycholate. This is Multidrug resistance protein MdtC from Escherichia fergusonii (strain ATCC 35469 / DSM 13698 / CCUG 18766 / IAM 14443 / JCM 21226 / LMG 7866 / NBRC 102419 / NCTC 12128 / CDC 0568-73).